We begin with the raw amino-acid sequence, 329 residues long: Putative glycosyltransferase CsbB (329 aa).

2 helical membrane passes run 231-251 (CFYT…ATFV) and 264-284 (FTII…LGII).

The protein belongs to the glycosyltransferase 2 family. GtrB subfamily.

The protein resides in the cell membrane. The protein is Putative glycosyltransferase CsbB (csbB) of Bacillus subtilis (strain 168).